Here is a 60-residue protein sequence, read N- to C-terminus: Venom protein 4.1 (60 aa).

The signal sequence occupies residues 1-26; sequence MKALCAILLVLFACSVMFEHFSISTA.

Belongs to the non-disulfide-bridged peptide (NDBP) superfamily. In terms of tissue distribution, expressed by the venom gland.

It localises to the secreted. This Lychas mucronatus (Chinese swimming scorpion) protein is Venom protein 4.1.